The chain runs to 172 residues: Capsid protein (172 aa).

A disordered region spans residues Met-1–Ser-26. The segment covering Lys-11 to Tyr-20 has biased composition (basic residues).

This sequence belongs to the nanoviridae capsid protein family.

The protein resides in the virion. This chain is Capsid protein (DNA-S), found in Faba bean necrotic yellows virus (isolate Syrian SV292-88) (FBNYV).